We begin with the raw amino-acid sequence, 463 residues long: L-seryl-tRNA(Sec) selenium transferase (463 aa).

K295 carries the post-translational modification N6-(pyridoxal phosphate)lysine.

This sequence belongs to the SelA family. Homodecamer; pentamer of dimers. Binds only one seryl-tRNA(Sec) per dimer. It depends on pyridoxal 5'-phosphate as a cofactor.

It is found in the cytoplasm. It catalyses the reaction L-seryl-tRNA(Sec) + selenophosphate + H(+) = L-selenocysteinyl-tRNA(Sec) + phosphate. The protein operates within aminoacyl-tRNA biosynthesis; selenocysteinyl-tRNA(Sec) biosynthesis; selenocysteinyl-tRNA(Sec) from L-seryl-tRNA(Sec) (bacterial route): step 1/1. Its function is as follows. Converts seryl-tRNA(Sec) to selenocysteinyl-tRNA(Sec) required for selenoprotein biosynthesis. This chain is L-seryl-tRNA(Sec) selenium transferase, found in Salmonella typhimurium (strain LT2 / SGSC1412 / ATCC 700720).